Consider the following 222-residue polypeptide: Capsular polysaccharide type 8 biosynthesis protein cap8A (222 aa).

The next 2 helical transmembrane spans lie at 20-40 (ILIILPLLFLIISAIVTFFVL) and 172-192 (VVNLIGAFFLGLVVALIYIFF).

This sequence belongs to the CpsC/CapA family.

It localises to the cell membrane. Functionally, required for the biosynthesis of type 8 capsular polysaccharide (Cap8/CP8). Might act as the chain-length regulator. This chain is Capsular polysaccharide type 8 biosynthesis protein cap8A (cap8A), found in Staphylococcus aureus.